The primary structure comprises 921 residues: Valine--tRNA ligase (921 aa).

Positions Pro-40 to His-50 match the 'HIGH' region motif. The 'KMSKS' region signature appears at Lys-522–Ser-526. Residue Lys-525 participates in ATP binding. A coiled-coil region spans residues Met-849 to Leu-921.

This sequence belongs to the class-I aminoacyl-tRNA synthetase family. ValS type 1 subfamily. Monomer.

It localises to the cytoplasm. It carries out the reaction tRNA(Val) + L-valine + ATP = L-valyl-tRNA(Val) + AMP + diphosphate. In terms of biological role, catalyzes the attachment of valine to tRNA(Val). As ValRS can inadvertently accommodate and process structurally similar amino acids such as threonine, to avoid such errors, it has a 'posttransfer' editing activity that hydrolyzes mischarged Thr-tRNA(Val) in a tRNA-dependent manner. This chain is Valine--tRNA ligase, found in Legionella pneumophila (strain Paris).